Consider the following 135-residue polypeptide: uncharacterized protein (135 aa).

2 consecutive transmembrane segments (helical) span residues 11 to 31 and 57 to 77; these read ILFF…GYLI and LGTA…TDAI.

Its subcellular location is the cell membrane. This is an uncharacterized protein from Methanocaldococcus jannaschii (strain ATCC 43067 / DSM 2661 / JAL-1 / JCM 10045 / NBRC 100440) (Methanococcus jannaschii).